The primary structure comprises 347 residues: Holliday junction branch migration complex subunit RuvB (347 aa).

The interval 1 to 183 (MSEERFVSGH…FGVVLQLQFY (183 aa)) is large ATPase domain (RuvB-L). Residues Leu-22, Arg-23, Gly-64, Lys-67, Thr-68, Thr-69, 130–132 (EDF), Arg-173, Tyr-183, and Arg-220 contribute to the ATP site. Thr-68 is a Mg(2+) binding site. The small ATPAse domain (RuvB-S) stretch occupies residues 184 to 254 (SEEELTRILM…VADAGLRMMG (71 aa)). The tract at residues 257–347 (AMGLDTVDHK…PEGPVQPRLF (91 aa)) is head domain (RuvB-H). Positions 312 and 317 each coordinate DNA.

Belongs to the RuvB family. In terms of assembly, homohexamer. Forms an RuvA(8)-RuvB(12)-Holliday junction (HJ) complex. HJ DNA is sandwiched between 2 RuvA tetramers; dsDNA enters through RuvA and exits via RuvB. An RuvB hexamer assembles on each DNA strand where it exits the tetramer. Each RuvB hexamer is contacted by two RuvA subunits (via domain III) on 2 adjacent RuvB subunits; this complex drives branch migration. In the full resolvosome a probable DNA-RuvA(4)-RuvB(12)-RuvC(2) complex forms which resolves the HJ.

Its subcellular location is the cytoplasm. It catalyses the reaction ATP + H2O = ADP + phosphate + H(+). In terms of biological role, the RuvA-RuvB-RuvC complex processes Holliday junction (HJ) DNA during genetic recombination and DNA repair, while the RuvA-RuvB complex plays an important role in the rescue of blocked DNA replication forks via replication fork reversal (RFR). RuvA specifically binds to HJ cruciform DNA, conferring on it an open structure. The RuvB hexamer acts as an ATP-dependent pump, pulling dsDNA into and through the RuvAB complex. RuvB forms 2 homohexamers on either side of HJ DNA bound by 1 or 2 RuvA tetramers; 4 subunits per hexamer contact DNA at a time. Coordinated motions by a converter formed by DNA-disengaged RuvB subunits stimulates ATP hydrolysis and nucleotide exchange. Immobilization of the converter enables RuvB to convert the ATP-contained energy into a lever motion, pulling 2 nucleotides of DNA out of the RuvA tetramer per ATP hydrolyzed, thus driving DNA branch migration. The RuvB motors rotate together with the DNA substrate, which together with the progressing nucleotide cycle form the mechanistic basis for DNA recombination by continuous HJ branch migration. Branch migration allows RuvC to scan DNA until it finds its consensus sequence, where it cleaves and resolves cruciform DNA. The protein is Holliday junction branch migration complex subunit RuvB of Symbiobacterium thermophilum (strain DSM 24528 / JCM 14929 / IAM 14863 / T).